The primary structure comprises 218 residues: Probable WRKY transcription factor 12 (218 aa).

Low complexity predominate over residues 49-63; it reads SSLSSPSFPIHNSSS. 2 disordered regions span residues 49 to 120 and 199 to 218; these read SSLS…DMKN and HNHIPSDDSTSPDHDCLSSF. Residues 64 to 77 show a composition bias toward polar residues; that stretch reads TTTTHAPLGFSNNL. Residues 105 to 116 show a composition bias toward low complexity; the sequence is SNSWWRSNSGSG. Residues 139–204 constitute a DNA-binding region (WRKY); that stretch reads SDVDVLDDGY…YEGRHNHIPS (66 aa).

This sequence belongs to the WRKY group II-c family.

The protein localises to the nucleus. Functionally, transcription factor. Interacts specifically with the W box (5'-(T)TGAC[CT]-3'), a frequently occurring elicitor-responsive cis-acting element. The sequence is that of Probable WRKY transcription factor 12 (WRKY12) from Arabidopsis thaliana (Mouse-ear cress).